Reading from the N-terminus, the 333-residue chain is tRNA N6-adenosine threonylcarbamoyltransferase (333 aa).

Fe cation is bound by residues His111 and His115. Substrate is bound by residues 134 to 138 (LVSGG), Asp167, Gly180, and Asn272. Residue Asp300 coordinates Fe cation.

Belongs to the KAE1 / TsaD family. It depends on Fe(2+) as a cofactor.

The protein resides in the cytoplasm. It carries out the reaction L-threonylcarbamoyladenylate + adenosine(37) in tRNA = N(6)-L-threonylcarbamoyladenosine(37) in tRNA + AMP + H(+). Functionally, required for the formation of a threonylcarbamoyl group on adenosine at position 37 (t(6)A37) in tRNAs that read codons beginning with adenine. Is involved in the transfer of the threonylcarbamoyl moiety of threonylcarbamoyl-AMP (TC-AMP) to the N6 group of A37, together with TsaE and TsaB. TsaD likely plays a direct catalytic role in this reaction. The protein is tRNA N6-adenosine threonylcarbamoyltransferase of Legionella pneumophila (strain Corby).